We begin with the raw amino-acid sequence, 301 residues long: Pyridoxal 5'-phosphate synthase subunit PdxS (301 aa).

Asp31 lines the D-ribose 5-phosphate pocket. Residue Lys88 is the Schiff-base intermediate with D-ribose 5-phosphate of the active site. A D-ribose 5-phosphate-binding site is contributed by Gly160. Arg172 contributes to the D-glyceraldehyde 3-phosphate binding site. Residues Gly221 and 242 to 243 each bind D-ribose 5-phosphate; that span reads GS. Residues 273 to 301 form a disordered region; that stretch reads EIAKSPGKGMKGQANETLPEEEKLQDRGI. A compositionally biased stretch (basic and acidic residues) spans 292 to 301; sequence EEEKLQDRGI.

It belongs to the PdxS/SNZ family. In terms of assembly, in the presence of PdxT, forms a dodecamer of heterodimers.

It catalyses the reaction aldehydo-D-ribose 5-phosphate + D-glyceraldehyde 3-phosphate + L-glutamine = pyridoxal 5'-phosphate + L-glutamate + phosphate + 3 H2O + H(+). It functions in the pathway cofactor biosynthesis; pyridoxal 5'-phosphate biosynthesis. Functionally, catalyzes the formation of pyridoxal 5'-phosphate from ribose 5-phosphate (RBP), glyceraldehyde 3-phosphate (G3P) and ammonia. The ammonia is provided by the PdxT subunit. Can also use ribulose 5-phosphate and dihydroxyacetone phosphate as substrates, resulting from enzyme-catalyzed isomerization of RBP and G3P, respectively. In Natronomonas pharaonis (strain ATCC 35678 / DSM 2160 / CIP 103997 / JCM 8858 / NBRC 14720 / NCIMB 2260 / Gabara) (Halobacterium pharaonis), this protein is Pyridoxal 5'-phosphate synthase subunit PdxS.